The primary structure comprises 88 residues: MAKGQSLQDPFLNALRRERIPVSIYLVNGIKLQGQIESFDQFVILLKNTVNQMVYKHAISTVVPARAVSHHSGEQQRAPSDRPEKTED.

One can recognise a Sm domain in the interval 9 to 68 (DPFLNALRRERIPVSIYLVNGIKLQGQIESFDQFVILLKNTVNQMVYKHAISTVVPARAV). Positions 66–88 (RAVSHHSGEQQRAPSDRPEKTED) are disordered. A compositionally biased stretch (basic and acidic residues) spans 71–88 (HSGEQQRAPSDRPEKTED).

It belongs to the Hfq family. As to quaternary structure, homohexamer.

Functionally, RNA chaperone that binds small regulatory RNA (sRNAs) and mRNAs to facilitate mRNA translational regulation in response to envelope stress, environmental stress and changes in metabolite concentrations. Also binds with high specificity to tRNAs. The polypeptide is RNA-binding protein Hfq (Vibrio atlanticus (strain LGP32) (Vibrio splendidus (strain Mel32))).